We begin with the raw amino-acid sequence, 277 residues long: Hydroxypyruvate/pyruvate aldolase (277 aa).

The active-site Proton acceptor is His-54. Positions 158 and 184 each coordinate a divalent metal cation.

Belongs to the HpcH/HpaI aldolase family. A divalent metal cation serves as cofactor.

It catalyses the reaction D-glyceraldehyde + 3-hydroxypyruvate = (3R,4S,5R)-3,4,5,6-tetrahydroxy-2-oxohexanoate. It carries out the reaction D-glyceraldehyde + 3-hydroxypyruvate = 2-dehydro-D-gluconate. The enzyme catalyses D-glyceraldehyde + 3-hydroxypyruvate = 2-dehydro-D-galactonate. The catalysed reaction is D-glyceraldehyde + pyruvate = 2-dehydro-3-deoxy-L-galactonate. Functionally, aldolase which can catalyze in vitro the aldolisation reaction between hydroxypyruvate (HPA) or pyruvate (PA) and D-glyceraldehyde (D-GA). The condensation of hydroxypyruvate and D-glyceraldehyde produces (3R,4S,5R)-3,4,5,6-tetrahydroxy-2-oxohexanoate as the major product, 2-dehydro-D-gluconate and 2-dehydro-D-galactonate. The condensation of pyruvate and D-glyceraldehyde produces 2-dehydro-3-deoxy-L-galactonate as the major product. The polypeptide is Hydroxypyruvate/pyruvate aldolase (Deinococcus radiodurans (strain ATCC 13939 / DSM 20539 / JCM 16871 / CCUG 27074 / LMG 4051 / NBRC 15346 / NCIMB 9279 / VKM B-1422 / R1)).